The primary structure comprises 1431 residues: MAKEFQFNWKPTIIPELLHGSVFDRYDDESTCLELNAQVRIDENGFFLRWLIEGKDAVVLDMGQIWEARTGGLPKDGRIMFELEQRGASETIAERTIWITHGQDLVNVQSFFLVAESVELAKTCRAGINDILKSSRIRHVCPTTQLMKYHTWLTMNVNERRKIPIKLIIKTFSSGKPEKMVQKCLNDLGLGGDKYTPARVINRSMGKKFRNFYKCSRGRKRKEREELDVDILTFEKFQRLYNKICPRTEVQELFVKLSGQKEYLTKERLINFLNEEQRDPRLNEILFPFFDSQRIVALLKKHENDIKYQEDGKMSGDGFLRFLMSDENPPVFLDRIEMFMDMDQPLCHYYINSSHNTYLTGRQYGGKSSSEIYRQVLLSGCRCIELDCWDGTGENKGEPIITHGKAMCTDVFFKDVLVQIRDTAFARSDFPVVLSFENHCSKSNQLKMAKYCMDIFGDMLLSKPFEDAPLDPGVSLPSPNRLRKKILIKNKRLKTDIERHQLDQFLREGKLDEEDELNETPEVVGEDSVSPRSGGSGGTGAPEEVDDDTSDDDDDPSVQTSLNVMRTIPTVNTTSNNGSNRSARSSLDTPSPSGGSLMVPDRATSTATSIKNAVLARSPNFSSLRQKLSFKRRQSPLAGDQRAHPEVEQPVSSSSPATPSISGPPPCATSSGSTSSITITTTGCSTSSSGPSKHILGGEMPAKENDEAHPELKQNFIAKNLKGFGFSKKQPVLTKEEEERIFAEYHYTGATTNIHPLLSSLVNYTHPVKFSGFDVAEANNLHFHMSSFSESTGLGYLKQSAPEFVNYNKRQSSRIYPKGARVDSSNFLPQIFWNAGCQMVSLNFQTPDVYMQLNMGKFEYNGGSGYLLKPDFLRRPDRTFDPFSESPVDGVIAAHCSVRVISGQFLSDRKIGTYVEVEMYGLPTDTIRKEHKTKVIPGNGLNPVYNEDPFVFRKVVLPELAVLRFAVYDENGKQLGQRILPLDGLQAGYRHISLRSDTNQSFILSPVLFVQIVIKTYVPDELSGLVDALADPRAFLSEQKKRQEALAHMGVDDSDIPDVPNTRNMALRHVKQPPRQNGSSADLLANNGQTGSARGDQTSSMASSTIRSPNEQPQPVAVDKFKVDPIEVDDLRRDKAFAKLLKRFQKELDDLRKKHQKQRDSIQKQQPARRRNSSIAWIQTNVDKLITNNRRSTKKEKGSRRSLTASVSSGCGSASGTVTVSVCSPSGASCSGYSTGGPSTPVACNSDGTGSPATIGSPVPQDLVNNDRVRSLVNTQTGEWSAMVRRHDEEEFELKKVQLKEQFDLLRKLMSEAQKNQMLALKLRLEAEGKDLKQTQTKKSMEDAKVIQLDKGIKTKAERDRRVKELNEKNLKMFVEERKRLAMKAQKHEEQLTKRHLDQLEQLDKDFHKALDAEVGNYKEEQLAAQPTSVV.

One can recognise a PI-PLC X-box domain in the interval 340–491; sequence MDMDQPLCHY…LRKKILIKNK (152 aa). His-355 is an active-site residue. Ca(2+) contacts are provided by Asn-356, Glu-385, and Asp-387. Residue His-403 is part of the active site. Glu-437 serves as a coordination point for Ca(2+). Substrate-binding residues include Lys-489 and Lys-491. Disordered regions lie at residues 510 to 601 and 632 to 692; these read KLDE…MVPD and RRQS…SGPS. Over residues 543–556 the composition is skewed to acidic residues; it reads EEVDDDTSDDDDDP. 3 stretches are compositionally biased toward low complexity: residues 572–586, 652–661, and 668–692; these read NTTS…ARSS, SSSSPATPSI, and ATSS…SGPS. One can recognise a PI-PLC Y-box domain in the interval 758–874; sequence LSSLVNYTHP…GYLLKPDFLR (117 aa). Residues Ser-787 and Arg-814 each coordinate substrate. The C2 domain occupies 877-1002; it reads DRTFDPFSES…SLRSDTNQSF (126 aa). Disordered stretches follow at residues 1072–1119, 1150–1176, and 1188–1216; these read QPPR…VAVD, DLRK…SSIA, and NNRR…SASG. Over residues 1074-1113 the composition is skewed to polar residues; sequence PRQNGSSADLLANNGQTGSARGDQTSSMASSTIRSPNEQP. Positions 1135–1166 form a coiled coil; it reads KAFAKLLKRFQKELDDLRKKHQKQRDSIQKQQ. Residues 1150–1162 show a composition bias toward basic and acidic residues; it reads DLRKKHQKQRDSI. Residues 1191 to 1200 show a composition bias toward basic residues; the sequence is RSTKKEKGSR. Positions 1204–1216 are enriched in low complexity; that stretch reads TASVSSGCGSASG. 2 coiled-coil regions span residues 1288–1318 and 1368–1402; these read DEEE…KNQM and EKNL…QLEQ.

Requires Ca(2+) as cofactor. In terms of tissue distribution, expressed in most or all neurons with high expression in the head and tail ganglia and low expression in the motor neurons of the ventral cord. Expressed in the intestine (at protein level). In males, expressed in vas deferens, spicule protractor muscles, diagonal muscles and a male-specific neuron.

The protein localises to the perikaryon. The protein resides in the cell projection. It localises to the axon. Its subcellular location is the synapse. It is found in the cell junction. The protein localises to the adherens junction. The catalysed reaction is a 1,2-diacyl-sn-glycero-3-phospho-(1D-myo-inositol-4,5-bisphosphate) + H2O = 1D-myo-inositol 1,4,5-trisphosphate + a 1,2-diacyl-sn-glycerol + H(+). Its function is as follows. Mediates the production of the second messenger molecules diacylglycerol (DAG) and inositol 1,4,5-trisphosphate (IP3) which plays an important role in the regulation of intracellular signaling cascades. Required in the nervous system to modulate neuronal activity. Facilitates synaptic transmission at neuromuscular junctions by regulating the release of acetylcholine from the motor neurons and thus affecting locomotion. Plays a role in efficient egg laying and defecation. Involved in axon regeneration after injury. Plays a role in male mating behavior by regulating spicule insertion and sperm transfer. By triggering Ca(2+) transient via IP3-mediated activation of IPR3 receptor itr-1 in ASH sensory neurons, regulates avoidance behavior in response to nose touch. By activating tpa-1 via DAG production, required for the expression of antimicrobial peptide nlp-29 in response to fungal infection. During embryogenesis, may play a role in epidermal morphogenesis together with plc-1. The sequence is that of 1-phosphatidylinositol 4,5-bisphosphate phosphodiesterase beta egl-8 from Caenorhabditis elegans.